Reading from the N-terminus, the 335-residue chain is ATP-dependent 6-phosphofructokinase (335 aa).

Gly-11 contributes to the ATP binding site. 21 to 25 (RAVVR) is an ADP binding site. ATP-binding positions include 72–73 (RY) and 102–105 (GDGS). Asp-103 serves as a coordination point for Mg(2+). 125–127 (TID) is a binding site for substrate. Asp-127 (proton acceptor) is an active-site residue. Arg-154 serves as a coordination point for ADP. Substrate is bound by residues Arg-162 and 169 to 171 (MGR). ADP-binding positions include 185-187 (GAD) and 213-215 (KKH). Residues Glu-222, Arg-244, and 250–253 (HIQR) each bind substrate.

The protein belongs to the phosphofructokinase type A (PFKA) family. ATP-dependent PFK group I subfamily. Prokaryotic clade 'B1' sub-subfamily. Homotetramer. The cofactor is Mg(2+).

The protein localises to the cytoplasm. It carries out the reaction beta-D-fructose 6-phosphate + ATP = beta-D-fructose 1,6-bisphosphate + ADP + H(+). It participates in carbohydrate degradation; glycolysis; D-glyceraldehyde 3-phosphate and glycerone phosphate from D-glucose: step 3/4. Allosterically activated by ADP and other diphosphonucleosides, and allosterically inhibited by phosphoenolpyruvate. Catalyzes the phosphorylation of D-fructose 6-phosphate to fructose 1,6-bisphosphate by ATP, the first committing step of glycolysis. This is ATP-dependent 6-phosphofructokinase from Streptococcus pneumoniae (strain ATCC BAA-255 / R6).